A 369-amino-acid polypeptide reads, in one-letter code: MNDETTPANKNPEKAELRCGWTTGACATAATKAALTALITGEFPDPVGIILPKGEVPYFQLAYEGLGEGYAMAGIVKDAGDDPDVTHGATIISTVYPAPPGTGIIFRAGEGVGTVTREGLAIPTPGEAAINPVPRRMMTEICEAICAEYGLPADLVITISVPGGEEIAQKTWNPRLGIIGGISILGTTGVVHPFSCSAWIHSIHRGIDVARAAGQKHVLGATGSTSEDAAQALYNLPDFAILDMGDFAGGVLKYLREHPIDRLTIAGGFAKLTKLAQGALDLHSSRSQVDKGFLWQIAERAGAPADMKERILLANTAMEVLELTQSIGIDIAGPIALEARQTALKTLRGAPVEVEIIVTDRKGNILARV.

Belongs to the CbiD family.

It catalyses the reaction Co-precorrin-5B + S-adenosyl-L-methionine = Co-precorrin-6A + S-adenosyl-L-homocysteine. The protein operates within cofactor biosynthesis; adenosylcobalamin biosynthesis; cob(II)yrinate a,c-diamide from sirohydrochlorin (anaerobic route): step 6/10. Catalyzes the methylation of C-1 in cobalt-precorrin-5B to form cobalt-precorrin-6A. In Brucella melitensis biotype 2 (strain ATCC 23457), this protein is Cobalt-precorrin-5B C(1)-methyltransferase.